The following is a 212-amino-acid chain: Uracil phosphoribosyltransferase (212 aa).

Residues Arg-78, Arg-103, and 130 to 138 (DPMLATGGS) each bind 5-phospho-alpha-D-ribose 1-diphosphate. Residues Ile-193 and 198–200 (GDA) each bind uracil. Residue Asp-199 participates in 5-phospho-alpha-D-ribose 1-diphosphate binding.

It belongs to the UPRTase family. The cofactor is Mg(2+).

It catalyses the reaction UMP + diphosphate = 5-phospho-alpha-D-ribose 1-diphosphate + uracil. It participates in pyrimidine metabolism; UMP biosynthesis via salvage pathway; UMP from uracil: step 1/1. Its activity is regulated as follows. Allosterically activated by GTP. Functionally, catalyzes the conversion of uracil and 5-phospho-alpha-D-ribose 1-diphosphate (PRPP) to UMP and diphosphate. The chain is Uracil phosphoribosyltransferase from Bordetella petrii (strain ATCC BAA-461 / DSM 12804 / CCUG 43448).